The following is a 415-amino-acid chain: Glutamyl-tRNA reductase (415 aa).

Residues 49–52 (TCNR), Ser-106, 111–113 (EPQ), and Gln-117 each bind substrate. The active-site Nucleophile is Cys-50. 186-191 (GAGETI) lines the NADP(+) pocket.

This sequence belongs to the glutamyl-tRNA reductase family. Homodimer.

The catalysed reaction is (S)-4-amino-5-oxopentanoate + tRNA(Glu) + NADP(+) = L-glutamyl-tRNA(Glu) + NADPH + H(+). Its pathway is porphyrin-containing compound metabolism; protoporphyrin-IX biosynthesis; 5-aminolevulinate from L-glutamyl-tRNA(Glu): step 1/2. Catalyzes the NADPH-dependent reduction of glutamyl-tRNA(Glu) to glutamate 1-semialdehyde (GSA). This is Glutamyl-tRNA reductase from Teredinibacter turnerae (strain ATCC 39867 / T7901).